Reading from the N-terminus, the 67-residue chain is Large ribosomal subunit protein bL31 (67 aa).

It belongs to the bacterial ribosomal protein bL31 family. Type A subfamily. As to quaternary structure, part of the 50S ribosomal subunit.

Binds the 23S rRNA. The protein is Large ribosomal subunit protein bL31 of Wolinella succinogenes (strain ATCC 29543 / DSM 1740 / CCUG 13145 / JCM 31913 / LMG 7466 / NCTC 11488 / FDC 602W) (Vibrio succinogenes).